The primary structure comprises 300 residues: ETS homologous factor (300 aa).

Residues 29–115 form the PNT domain; sequence STCNVSSGFF…SNLQHLKWNG (87 aa). Positions 183 to 202 are disordered; that stretch reads ESPDMKKEQDPPAKCHTKKH. Basic and acidic residues predominate over residues 185 to 195; that stretch reads PDMKKEQDPPA. Residues 207–289 constitute a DNA-binding region (ETS); that stretch reads THLWEFIRDI…DGRRLVYKFG (83 aa).

Belongs to the ETS family. Expressed exclusively in tissues with a high content of epithelial cells. Highly expressed in salivary gland, mammary gland, prostate, and lung. Weakly expressed in kidney and colon. Not detected in heart, brain, placenta, liver, skeletal muscle, spleen, thymus, testis, ovary, small intestine or peripheral blood leukocytes.

The protein localises to the nucleus. Its function is as follows. Transcriptional activator that may play a role in regulating epithelial cell differentiation and proliferation. May act as a repressor for a specific subset of ETS/AP-1-responsive genes and as a modulator of the nuclear response to mitogen-activated protein kinase signaling cascades. Binds to DNA sequences containing the consensus nucleotide core sequence GGAA. Involved in regulation of TNFRSF10B/DR5 expression through Ets-binding sequences on the TNFRSF10B/DR5 promoter. May contribute to development and carcinogenesis by acting as a tumor suppressor gene or anti-oncogene. This chain is ETS homologous factor, found in Homo sapiens (Human).